The sequence spans 196 residues: Corticoliberin (196 aa).

The signal sequence occupies residues 1 to 24 (MRLPLLLSAGVLLVVSLPCPPCRA). A propeptide spanning residues 25 to 153 (LLSRGPIPGA…RQETPERERR (129 aa)) is cleaved from the precursor. Positions 122-158 (PRRQLDSPAGPAERGEENALGSRQETPERERRSEEPP) are disordered. The segment covering 146–156 (ETPERERRSEE) has biased composition (basic and acidic residues). Position 194 is an isoleucine amide (Ile-194).

Belongs to the sauvagine/corticotropin-releasing factor/urotensin I family. In terms of assembly, interacts (via C-terminus) with CRFR1 (via N-terminal extracellular domain). Produced by the hypothalamus.

The protein localises to the secreted. Functionally, hormone regulating the release of corticotropin from pituitary gland. Induces NLRP6 in intestinal epithelial cells, hence may influence gut microbiota profile. This chain is Corticoliberin (CRH), found in Canis lupus familiaris (Dog).